The sequence spans 350 residues: Probable transposase-like protein At4g04430 (350 aa).

2 disordered regions span residues 1–57 (MPSD…PSVN) and 307–328 (QIGQ…QVAN). Over residues 30–43 (SGVQGSGSRSGSTV) the composition is skewed to low complexity.

Belongs to the transposase 24 family.

This is Probable transposase-like protein At4g04430 from Arabidopsis thaliana (Mouse-ear cress).